The sequence spans 141 residues: MAKKVIAIIKIVLPAGKATPAPPVGPALGPYGVSSVNFCKEYNAKTADKGGLVIPAEITVYDDRSYSFVLKTPPASVLIAKAASVEKGSGEPNRKKVGSITKAQLEQIAKVKFPDLNTQNLEAASRIVEGTARNMGITITD.

The protein belongs to the universal ribosomal protein uL11 family. As to quaternary structure, part of the ribosomal stalk of the 50S ribosomal subunit. Interacts with L10 and the large rRNA to form the base of the stalk. L10 forms an elongated spine to which L12 dimers bind in a sequential fashion forming a multimeric L10(L12)X complex.

The protein localises to the plastid. The protein resides in the cyanelle. Forms part of the ribosomal stalk which helps the ribosome interact with GTP-bound translation factors. This Cyanophora paradoxa protein is Large ribosomal subunit protein uL11c.